The following is a 362-amino-acid chain: Type II methyltransferase M.MamI (362 aa).

Belongs to the N(4)/N(6)-methyltransferase family.

The enzyme catalyses a 2'-deoxyadenosine in DNA + S-adenosyl-L-methionine = an N(6)-methyl-2'-deoxyadenosine in DNA + S-adenosyl-L-homocysteine + H(+). Its function is as follows. A gamma subtype methylase that recognizes the double-stranded sequence 5'-GATNNNNATC-3', methylates A-? on both strands, and protects the DNA from cleavage by the MamI endonuclease. The protein is Type II methyltransferase M.MamI of Microbacterium ammoniaphilum.